The sequence spans 142 residues: Large ribosomal subunit protein cL37 alpha (142 aa).

The transit peptide at 1-62 (MALLSPLLSL…AQKRGTVVAM (62 aa)) directs the protein to the chloroplast. Residues 123–142 (RKLRKRGAWPPSKMKKLKNV) form a disordered region.

It belongs to the chloroplast-specific ribosomal protein cL37 family. In terms of assembly, component of the chloroplast large ribosomal subunit (LSU). Mature 70S chloroplast ribosomes of higher plants consist of a small (30S) and a large (50S) subunit. The 30S small subunit contains 1 molecule of ribosomal RNA (16S rRNA) and 24 different proteins. The 50S large subunit contains 3 rRNA molecules (23S, 5S and 4.5S rRNA) and 33 different proteins.

It localises to the plastid. The protein localises to the chloroplast. Functionally, component of the chloroplast ribosome (chloro-ribosome), a dedicated translation machinery responsible for the synthesis of chloroplast genome-encoded proteins, including proteins of the transcription and translation machinery and components of the photosynthetic apparatus. The chain is Large ribosomal subunit protein cL37 alpha (PSRP5) from Spinacia oleracea (Spinach).